The primary structure comprises 282 residues: Cell cycle checkpoint protein RAD1 (282 aa).

It belongs to the rad1 family. Component of the toroidal 9-1-1 (RAD9-RAD1-HUS1) complex, composed of RAD9A, RAD1 and HUS1. The 9-1-1 complex associates with LIG1, POLB, FEN1, RAD17, HDAC1, RPA1 and RPA2. The 9-1-1 complex associates with the RAD17-RFC complex. RAD1 interacts with POLB, FEN1, HUS1, HUS1B, RAD9A and RAD9B. Interacts with DNAJC7. Interacts with RHNO1; interaction is direct. Expressed in testis, uterus, bladder, spleen, ovaries, lung, brain and muscle (at protein level).

The protein localises to the nucleus. In terms of biological role, component of the 9-1-1 cell-cycle checkpoint response complex that plays a major role in DNA repair. The 9-1-1 complex is recruited to DNA lesion upon damage by the RAD17-replication factor C (RFC) clamp loader complex. Acts then as a sliding clamp platform on DNA for several proteins involved in long-patch base excision repair (LP-BER). The 9-1-1 complex stimulates DNA polymerase beta (POLB) activity by increasing its affinity for the 3'-OH end of the primer-template and stabilizes POLB to those sites where LP-BER proceeds; endonuclease FEN1 cleavage activity on substrates with double, nick, or gap flaps of distinct sequences and lengths; and DNA ligase I (LIG1) on long-patch base excision repair substrates. The 9-1-1 complex is necessary for the recruitment of RHNO1 to sites of double-stranded breaks (DSB) occurring during the S phase. The protein is Cell cycle checkpoint protein RAD1 (RAD1) of Homo sapiens (Human).